A 236-amino-acid chain; its full sequence is Uridylate kinase (236 aa).

12 to 15 (KLSG) contacts ATP. The tract at residues 20–25 (GEKGFG) is involved in allosteric activation by GTP. Gly-54 contributes to the UMP binding site. ATP is bound by residues Gly-55 and Arg-59. UMP-binding positions include Asp-72 and 133–140 (TGNPYFST). Positions 161, 166, and 169 each coordinate ATP.

The protein belongs to the UMP kinase family. Homohexamer.

The protein resides in the cytoplasm. It carries out the reaction UMP + ATP = UDP + ADP. Its pathway is pyrimidine metabolism; CTP biosynthesis via de novo pathway; UDP from UMP (UMPK route): step 1/1. Allosterically activated by GTP. Inhibited by UTP. In terms of biological role, catalyzes the reversible phosphorylation of UMP to UDP. In Alkaliphilus oremlandii (strain OhILAs) (Clostridium oremlandii (strain OhILAs)), this protein is Uridylate kinase.